Consider the following 551-residue polypeptide: Putative hydroxymethylpyrimidine/phosphomethylpyrimidine kinase 2 (551 aa).

4-amino-5-hydroxymethyl-2-methylpyrimidine is bound at residue E76.

The protein in the N-terminal section; belongs to the ThiD family. It in the C-terminal section; belongs to the thiaminase-2 family.

It is found in the cytoplasm. The enzyme catalyses 4-amino-5-hydroxymethyl-2-methylpyrimidine + ATP = 4-amino-2-methyl-5-(phosphooxymethyl)pyrimidine + ADP + H(+). It carries out the reaction 4-amino-2-methyl-5-(phosphooxymethyl)pyrimidine + ATP = 4-amino-2-methyl-5-(diphosphooxymethyl)pyrimidine + ADP. The protein operates within cofactor biosynthesis; thiamine diphosphate biosynthesis; 4-amino-2-methyl-5-diphosphomethylpyrimidine from 5-amino-1-(5-phospho-D-ribosyl)imidazole: step 2/3. It functions in the pathway cofactor biosynthesis; thiamine diphosphate biosynthesis; 4-amino-2-methyl-5-diphosphomethylpyrimidine from 5-amino-1-(5-phospho-D-ribosyl)imidazole: step 3/3. Catalyzes the phosphorylation of hydroxymethylpyrimidine phosphate (HMP-P) to HMP-PP, and of HMP to HMP-P. This is Putative hydroxymethylpyrimidine/phosphomethylpyrimidine kinase 2 from Schizosaccharomyces pombe (strain 972 / ATCC 24843) (Fission yeast).